Reading from the N-terminus, the 105-residue chain is MNTIALYLLTAVAEILGCYLPYLWLRQGASAWVLLPGALSLALFAWLLSLHPDASGRVYAAYGGVYIGVAVLWLWLVDGVRPSAWDLAGVGVAFGGMAIIVFQPR.

The next 4 membrane-spanning stretches (helical) occupy residues 4–24 (IALY…PYLW), 28–48 (GASA…AWLL), 60–80 (AAYG…VDGV), and 82–102 (PSAW…IIVF).

Belongs to the UPF0060 family.

It is found in the cell inner membrane. This chain is UPF0060 membrane protein Reut_B3679, found in Cupriavidus pinatubonensis (strain JMP 134 / LMG 1197) (Cupriavidus necator (strain JMP 134)).